We begin with the raw amino-acid sequence, 254 residues long: 5'-nucleotidase SurE (254 aa).

Positions 8, 9, 39, and 91 each coordinate a divalent metal cation.

Belongs to the SurE nucleotidase family. It depends on a divalent metal cation as a cofactor.

The protein localises to the cytoplasm. It catalyses the reaction a ribonucleoside 5'-phosphate + H2O = a ribonucleoside + phosphate. Functionally, nucleotidase that shows phosphatase activity on nucleoside 5'-monophosphates. This is 5'-nucleotidase SurE from Pseudoalteromonas translucida (strain TAC 125).